Reading from the N-terminus, the 388-residue chain is Palmitoyltransferase ZDHHC18 (388 aa).

The segment at methionine 1–arginine 67 is disordered. Residues methionine 1 to histidine 90 are Cytoplasmic-facing. The span at serine 10–proline 27 shows a compositional bias: low complexity. Serine 19 bears the Phosphoserine mark. The segment covering alanine 28–proline 46 has biased composition (pro residues). Residues glycine 91–phenylalanine 111 form a helical membrane-spanning segment. At aspartate 112–lysine 119 the chain is on the lumenal side. The helical transmembrane segment at leucine 120–leucine 140 threads the bilayer. The Cytoplasmic segment spans residues glutamine 141–arginine 235. The DHHC domain occupies lysine 192–leucine 242. Catalysis depends on cysteine 222, which acts as the S-palmitoyl cysteine intermediate. The chain crosses the membrane as a helical span at residues phenylalanine 236 to valine 256. Over threonine 257–alanine 277 the chain is Lumenal. A helical membrane pass occupies residues serine 278–phenylalanine 298. Over histidine 299–proline 388 the chain is Cytoplasmic. A disordered region spans residues leucine 364–proline 388. A compositionally biased stretch (basic and acidic residues) spans arginine 369–proline 379.

The protein belongs to the DHHC palmitoyltransferase family. ERF2/ZDHHC9 subfamily. As to expression, widely expressed.

The protein resides in the golgi apparatus membrane. It carries out the reaction L-cysteinyl-[protein] + hexadecanoyl-CoA = S-hexadecanoyl-L-cysteinyl-[protein] + CoA. Palmitoyltransferase that catalyzes the addition of palmitate onto various protein substrates, such as CGAS, HRAS and LCK. Acts as a negative regulator of the cGAS-STING pathway be mediating palmitoylation and inactivation of CGAS. May also have a palmitoyltransferase activity toward the beta-2 adrenergic receptor/ADRB2 and therefore regulate G protein-coupled receptor signaling. This Homo sapiens (Human) protein is Palmitoyltransferase ZDHHC18.